The primary structure comprises 631 residues: Phosphomethylpyrimidine synthase (631 aa).

Substrate contacts are provided by residues asparagine 239, methionine 268, tyrosine 297, histidine 333, 353-355 (SRG), 394-397 (DGLR), and glutamate 433. Histidine 437 is a Zn(2+) binding site. Tyrosine 460 serves as a coordination point for substrate. Histidine 501 provides a ligand contact to Zn(2+). The [4Fe-4S] cluster site is built by cysteine 581, cysteine 584, and cysteine 589.

Belongs to the ThiC family. Homodimer. Requires [4Fe-4S] cluster as cofactor.

It catalyses the reaction 5-amino-1-(5-phospho-beta-D-ribosyl)imidazole + S-adenosyl-L-methionine = 4-amino-2-methyl-5-(phosphooxymethyl)pyrimidine + CO + 5'-deoxyadenosine + formate + L-methionine + 3 H(+). It participates in cofactor biosynthesis; thiamine diphosphate biosynthesis. Catalyzes the synthesis of the hydroxymethylpyrimidine phosphate (HMP-P) moiety of thiamine from aminoimidazole ribotide (AIR) in a radical S-adenosyl-L-methionine (SAM)-dependent reaction. The protein is Phosphomethylpyrimidine synthase of Escherichia coli O45:K1 (strain S88 / ExPEC).